The primary structure comprises 182 residues: Keratin, high-sulfur matrix protein, B2D (182 aa).

Repeat copies occupy residues P27 to Q36, P37 to Q46, P47 to Q56, P57 to Q66, P67 to Q76, and P77 to E86. Positions P27–E86 are 6 X 10 AA tandem repeats.

Its function is as follows. The keratin products of mammalian epidermal derivatives such as wool and hair consist of microfibrils embedded in a rigid matrix of other proteins. The matrix proteins include the high-sulfur and high-tyrosine keratins, having molecular weights of 6-20 kDa, whereas the microfibrils contain the larger, low-sulfur keratins (40-56 kDa). The chain is Keratin, high-sulfur matrix protein, B2D from Ovis aries (Sheep).